A 241-amino-acid chain; its full sequence is Phosphoadenosine 5'-phosphosulfate reductase (241 aa).

Residues 221–241 (GADPRSGRWRGKAKTECGLHA) form a disordered region. The Nucleophile; cysteine thiosulfonate intermediate role is filled by cysteine 237.

It belongs to the PAPS reductase family. CysH subfamily.

Its subcellular location is the cytoplasm. The catalysed reaction is [thioredoxin]-disulfide + sulfite + adenosine 3',5'-bisphosphate + 2 H(+) = [thioredoxin]-dithiol + 3'-phosphoadenylyl sulfate. Its pathway is sulfur metabolism; hydrogen sulfide biosynthesis; sulfite from sulfate: step 3/3. In terms of biological role, catalyzes the formation of sulfite from phosphoadenosine 5'-phosphosulfate (PAPS) using thioredoxin as an electron donor. The sequence is that of Phosphoadenosine 5'-phosphosulfate reductase from Gloeobacter violaceus (strain ATCC 29082 / PCC 7421).